The chain runs to 116 residues: MGVERKIITRGSGPSPASGDKVSIHYTGWIYDPKKANKGFQGKQFDSSRSPGRGPLVVNIGQGKVIKGWDEGVMQMSLGEKSTLTITPDYGYGDKAAGKIPANSTLIFEVELLKIN.

In terms of domain architecture, PPIase FKBP-type spans 19 to 116 (GDKVSIHYTG…IFEVELLKIN (98 aa)).

Belongs to the FKBP-type PPIase family. FKBP1 subfamily.

The protein resides in the cytoplasm. The enzyme catalyses [protein]-peptidylproline (omega=180) = [protein]-peptidylproline (omega=0). Its activity is regulated as follows. Inhibited by both FK506 and rapamycin. Its function is as follows. PPIases accelerate the folding of proteins. It catalyzes the cis-trans isomerization of proline imidic peptide bonds in oligopeptides. In Aspergillus oryzae (strain ATCC 42149 / RIB 40) (Yellow koji mold), this protein is FK506-binding protein 1 (fpr1).